Reading from the N-terminus, the 260-residue chain is Putative ATP-binding protein BAB2_1147 (260 aa).

The ABC transporter domain occupies 5–228 (ISFNNVVMRY…DLPYPRTEAI (224 aa)). 37–44 (GPSGCGKS) serves as a coordination point for ATP.

The protein belongs to the ABC transporter superfamily. In terms of assembly, the complex is composed of two ATP-binding proteins (BAB2_1147), two transmembrane proteins (BAB2_1148) and a solute-binding protein (BAB2_1146).

The protein localises to the cell inner membrane. Probably part of an ABC transporter complex. Probably Responsible for energy coupling to the transport system. This chain is Putative ATP-binding protein BAB2_1147, found in Brucella abortus (strain 2308).